The following is a 129-amino-acid chain: Small ribosomal subunit protein uS11 (129 aa).

It belongs to the universal ribosomal protein uS11 family. As to quaternary structure, part of the 30S ribosomal subunit. Interacts with proteins S7 and S18. Binds to IF-3.

Its function is as follows. Located on the platform of the 30S subunit, it bridges several disparate RNA helices of the 16S rRNA. Forms part of the Shine-Dalgarno cleft in the 70S ribosome. This chain is Small ribosomal subunit protein uS11, found in Methylorubrum populi (strain ATCC BAA-705 / NCIMB 13946 / BJ001) (Methylobacterium populi).